The sequence spans 196 residues: Transcription repressor OFP10 (196 aa).

In terms of domain architecture, OVATE spans 100–159 (MAKESINPFEDYKKSMNQMIEERYIETESELKELLRCFLDINPSPQHNLIVRAFVDVCSH).

In terms of tissue distribution, expressed in roots, cauline leaves, shoots, stems, flower buds and siliques.

The protein resides in the nucleus. Transcriptional repressor that may regulate multiple aspects of plant growth and development through the regulation of BEL1-LIKE (BLH) and KNOX TALE (KNAT) homeodomain transcription factors. The polypeptide is Transcription repressor OFP10 (OFP10) (Arabidopsis thaliana (Mouse-ear cress)).